Reading from the N-terminus, the 1072-residue chain is Isoleucine--tRNA ligase, cytoplasmic (1072 aa).

Residues 47 to 57 carry the 'HIGH' region motif; the sequence is PFATGTPHYGH. Lysine 486 participates in a covalent cross-link: Glycyl lysine isopeptide (Lys-Gly) (interchain with G-Cter in ubiquitin). Positions 602 to 606 match the 'KMSKS' region motif; sequence KMSKS. ATP is bound at residue lysine 605. Phosphoserine occurs at positions 829 and 1059.

This sequence belongs to the class-I aminoacyl-tRNA synthetase family.

It localises to the cytoplasm. The enzyme catalyses tRNA(Ile) + L-isoleucine + ATP = L-isoleucyl-tRNA(Ile) + AMP + diphosphate. This chain is Isoleucine--tRNA ligase, cytoplasmic (ILS1), found in Saccharomyces cerevisiae (strain ATCC 204508 / S288c) (Baker's yeast).